A 178-amino-acid chain; its full sequence is MSDVQTPFQLLVDIDQRCRRLAAGLPAQQEAVQSWSGIGFRMGGRFFVAPMGEVGEVLHEPRYTQLPGVKTWVKGVANVRGRLLPIMDLCGFLGTELSPLRKQRRVLVVEHLDVFAGLIVDEVFGMQHFPVDTFSEQLPPLEAALQPFIHGVFHREQPWLVFSPHALAQHQGFLDVAV.

Residues 34 to 173 form the CheW-like domain; the sequence is SWSGIGFRMG…PHALAQHQGF (140 aa).

In terms of biological role, may be a part of a signal-transduction system that regulates twitching motility by controlling pilus function (extension and retraction). This chain is Protein PilI (pilI), found in Pseudomonas aeruginosa (strain ATCC 15692 / DSM 22644 / CIP 104116 / JCM 14847 / LMG 12228 / 1C / PRS 101 / PAO1).